The primary structure comprises 104 residues: UPF0213 protein VIBHAR_05350 (104 aa).

One can recognise a GIY-YIG domain in the interval 7–82 (QRWSVYLIRN…KQLTKTKKEL (76 aa)).

The protein belongs to the UPF0213 family.

This is UPF0213 protein VIBHAR_05350 from Vibrio campbellii (strain ATCC BAA-1116).